The following is a 602-amino-acid chain: Probable translation initiation factor IF-2 (602 aa).

A tr-type G domain is found at 9–229 (LRQPIVVVLG…GLTQNYMKNK (221 aa)). Positions 18 to 25 (GHVDHGKT) are G1. Position 18–25 (18–25 (GHVDHGKT)) interacts with GTP. A G2 region spans residues 43–47 (EMTQE). Residues 82–85 (DTPG) are G3. Residues 82–86 (DTPGH) and 136–139 (NKID) contribute to the GTP site. The segment at 136 to 139 (NKID) is G4. A G5 region spans residues 204–206 (SAK).

This sequence belongs to the TRAFAC class translation factor GTPase superfamily. Classic translation factor GTPase family. IF-2 subfamily.

Functionally, function in general translation initiation by promoting the binding of the formylmethionine-tRNA to ribosomes. Seems to function along with eIF-2. This Sulfolobus acidocaldarius (strain ATCC 33909 / DSM 639 / JCM 8929 / NBRC 15157 / NCIMB 11770) protein is Probable translation initiation factor IF-2 (infB).